Consider the following 100-residue polypeptide: Urease subunit gamma (100 aa).

Belongs to the urease gamma subunit family. As to quaternary structure, heterotrimer of UreA (gamma), UreB (beta) and UreC (alpha) subunits. Three heterotrimers associate to form the active enzyme.

It is found in the cytoplasm. The enzyme catalyses urea + 2 H2O + H(+) = hydrogencarbonate + 2 NH4(+). The protein operates within nitrogen metabolism; urea degradation; CO(2) and NH(3) from urea (urease route): step 1/1. The polypeptide is Urease subunit gamma (Pseudoalteromonas translucida (strain TAC 125)).